Consider the following 515-residue polypeptide: G-protein coupled receptor 176 (515 aa).

Polar residues predominate over residues 1-16 (MGHNGSWISPNASEPH). A disordered region spans residues 1–20 (MGHNGSWISPNASEPHNASG). The Extracellular portion of the chain corresponds to 1-42 (MGHNGSWISPNASEPHNASGAEAAGVNRSALGEFGEAQLYRQ). N-linked (GlcNAc...) asparagine glycans are attached at residues Asn4, Asn11, Asn17, and Asn27. The chain crosses the membrane as a helical span at residues 43–63 (FTTTVQVVIFIGSLLGNFMVL). The Cytoplasmic segment spans residues 64–82 (WSTCRTTVFKSVTNRFIKN). Residues 83–103 (LACSGICASLVCVPFDIILST) form a helical membrane-spanning segment. Over 104-118 (SPHCCWWIYTMLFCK) the chain is Extracellular. Residues 119 to 139 (VVKFLHKVFCSVTILSFPAIA) traverse the membrane as a helical segment. Over 140-160 (LDRYYSVLYPLERKISDAKSR) the chain is Cytoplasmic. The helical transmembrane segment at 161-181 (ELVMYIWAHAVVASVPVFAVT) threads the bilayer. Topologically, residues 182 to 207 (NVADIYATSTCTEVWSNSLGHLVYVL) are extracellular. The chain crosses the membrane as a helical span at residues 208–228 (VYNITTVIVPVVVVFLFLILI). The Cytoplasmic portion of the chain corresponds to 229 to 267 (RRALSASQKKKVIIAALRTPQNTISIPYASQREAELHAT). A helical transmembrane segment spans residues 268 to 288 (LLSMVMVFILCSVPYATLVVY). The Extracellular portion of the chain corresponds to 289–299 (QTVLNVPDTSV). Residues 300 to 320 (FLLLTAVWLPKVSLLANPVLF) traverse the membrane as a helical segment. At 321-515 (LTVNKSVRKC…KVSIFPKVDS (195 aa)) the chain is on the cytoplasmic side.

It belongs to the G-protein coupled receptor 1 family.

It localises to the cell membrane. In terms of biological role, orphan receptor involved in normal circadian rhythm behavior. Acts through the G-protein subclass G(z)-alpha and has an agonist-independent basal activity to repress cAMP production. This is G-protein coupled receptor 176 (GPR176) from Homo sapiens (Human).